The chain runs to 254 residues: Peroxisomal membrane protein 11-2 (254 aa).

Residues 1–113 are Cytoplasmic-facing; the sequence is MVTAAGSPSS…YHPHPHVHPL (113 aa). The chain crosses the membrane as a helical span at residues 114 to 134; it reads LVLLAYGGQGVYNFLEQFAWL. The Lumenal portion of the chain corresponds to 135 to 227; it reads AKAGLLPARL…TVGDVTGRKG (93 aa). A helical membrane pass occupies residues 228-247; the sequence is LLGSSTLMASAGLLSALISV. The Cytoplasmic segment spans residues 248 to 254; that stretch reads HKNWNSC.

It belongs to the peroxin-11 family.

The protein resides in the peroxisome membrane. Involved in peroxisomal proliferation. This is Peroxisomal membrane protein 11-2 (PEX11-2) from Oryza sativa subsp. japonica (Rice).